The sequence spans 217 residues: Protein GrpE (217 aa).

3 stretches are compositionally biased toward acidic residues: residues 1 to 28, 136 to 152, and 204 to 217; these read MSDDQGDAVEASSEADEEASTSPDEGDD, DILDGEGVEAIEPDPGT, and SEAEDDADGEDGDE. Disordered regions lie at residues 1 to 44, 135 to 157, and 193 to 217; these read MSDD…NDPA, DDILDGEGVEAIEPDPGTETDPK, and QVTVSEGPSGDSEAEDDADGEDGDE.

This sequence belongs to the GrpE family. In terms of assembly, homodimer.

The protein localises to the cytoplasm. Functionally, participates actively in the response to hyperosmotic and heat shock by preventing the aggregation of stress-denatured proteins, in association with DnaK and GrpE. It is the nucleotide exchange factor for DnaK and may function as a thermosensor. Unfolded proteins bind initially to DnaJ; upon interaction with the DnaJ-bound protein, DnaK hydrolyzes its bound ATP, resulting in the formation of a stable complex. GrpE releases ADP from DnaK; ATP binding to DnaK triggers the release of the substrate protein, thus completing the reaction cycle. Several rounds of ATP-dependent interactions between DnaJ, DnaK and GrpE are required for fully efficient folding. The polypeptide is Protein GrpE (Natronomonas pharaonis (strain ATCC 35678 / DSM 2160 / CIP 103997 / JCM 8858 / NBRC 14720 / NCIMB 2260 / Gabara) (Halobacterium pharaonis)).